The primary structure comprises 126 residues: Anti-adapter protein IraD (126 aa).

This sequence belongs to the GpW/Gp25 family. IraD subfamily. As to quaternary structure, interacts with RssB.

The protein localises to the cytoplasm. Inhibits RpoS proteolysis by regulating RssB activity, thereby increasing the stability of the sigma stress factor RpoS during oxidative stress. Its effect on RpoS stability is due to its interaction with RssB, which probably blocks the interaction of RssB with RpoS, and the consequent delivery of the RssB-RpoS complex to the ClpXP protein degradation pathway. In Salmonella paratyphi A (strain ATCC 9150 / SARB42), this protein is Anti-adapter protein IraD.